We begin with the raw amino-acid sequence, 202 residues long: Methylthioribulose-1-phosphate dehydratase (202 aa).

Residues H93 and H95 each coordinate Zn(2+).

This sequence belongs to the aldolase class II family. MtnB subfamily. It depends on Zn(2+) as a cofactor.

The catalysed reaction is 5-(methylsulfanyl)-D-ribulose 1-phosphate = 5-methylsulfanyl-2,3-dioxopentyl phosphate + H2O. It functions in the pathway amino-acid biosynthesis; L-methionine biosynthesis via salvage pathway; L-methionine from S-methyl-5-thio-alpha-D-ribose 1-phosphate: step 2/6. Functionally, catalyzes the dehydration of methylthioribulose-1-phosphate (MTRu-1-P) into 2,3-diketo-5-methylthiopentyl-1-phosphate (DK-MTP-1-P). The polypeptide is Methylthioribulose-1-phosphate dehydratase (Klebsiella pneumoniae (strain 342)).